Reading from the N-terminus, the 530-residue chain is Bifunctional purine biosynthesis protein PurH (530 aa).

Residues 1-148 (MEQARPIRRA…KNHKDVAIVV (148 aa)) enclose the MGS-like domain.

It belongs to the PurH family.

It catalyses the reaction (6R)-10-formyltetrahydrofolate + 5-amino-1-(5-phospho-beta-D-ribosyl)imidazole-4-carboxamide = 5-formamido-1-(5-phospho-D-ribosyl)imidazole-4-carboxamide + (6S)-5,6,7,8-tetrahydrofolate. It carries out the reaction IMP + H2O = 5-formamido-1-(5-phospho-D-ribosyl)imidazole-4-carboxamide. The protein operates within purine metabolism; IMP biosynthesis via de novo pathway; 5-formamido-1-(5-phospho-D-ribosyl)imidazole-4-carboxamide from 5-amino-1-(5-phospho-D-ribosyl)imidazole-4-carboxamide (10-formyl THF route): step 1/1. Its pathway is purine metabolism; IMP biosynthesis via de novo pathway; IMP from 5-formamido-1-(5-phospho-D-ribosyl)imidazole-4-carboxamide: step 1/1. This Aeromonas salmonicida (strain A449) protein is Bifunctional purine biosynthesis protein PurH.